A 661-amino-acid chain; its full sequence is uncharacterized protein (661 aa).

The next 7 membrane-spanning stretches (helical) occupy residues 37–57 (VFLG…LFLS), 87–107 (INSP…AVFI), 120–140 (WLLL…NVIL), 158–178 (VFWQ…PIIV), 243–263 (LLDI…LYTI), 266–286 (TLMW…IAIG), and 341–361 (FNLL…YNYF). Residues 123-410 (LGVLLSLLFV…VTNQIQNITE (288 aa)) form the ABC transmembrane type-1 domain. The 207-residue stretch at 453–659 (VALENVTLSP…AEGRWQISPI (207 aa)) folds into the ABC transporter domain. Residue 487 to 494 (GPSGSGKS) participates in ATP binding.

The protein belongs to the ABC transporter superfamily.

It is found in the cell inner membrane. This is an uncharacterized protein from Synechocystis sp. (strain ATCC 27184 / PCC 6803 / Kazusa).